The primary structure comprises 338 residues: Probable tRNA pseudouridine synthase B (338 aa).

Aspartate 78 functions as the Nucleophile in the catalytic mechanism. Residues 245-320 (LPKIILRDSA…IAASPIRVLM (76 aa)) form the PUA domain.

This sequence belongs to the pseudouridine synthase TruB family. Type 2 subfamily.

The catalysed reaction is uridine(55) in tRNA = pseudouridine(55) in tRNA. Could be responsible for synthesis of pseudouridine from uracil-55 in the psi GC loop of transfer RNAs. The polypeptide is Probable tRNA pseudouridine synthase B (Methanosarcina mazei (strain ATCC BAA-159 / DSM 3647 / Goe1 / Go1 / JCM 11833 / OCM 88) (Methanosarcina frisia)).